The following is a 156-amino-acid chain: Ribosome maturation factor RimP (156 aa).

It belongs to the RimP family.

It localises to the cytoplasm. Required for maturation of 30S ribosomal subunits. This Bacillus cytotoxicus (strain DSM 22905 / CIP 110041 / 391-98 / NVH 391-98) protein is Ribosome maturation factor RimP.